The primary structure comprises 439 residues: Taxadien-5-alpha-ol O-acetyltransferase (439 aa).

Residues His-164 and Asp-373 each act as proton acceptor in the active site.

This sequence belongs to the plant acyltransferase family.

The catalysed reaction is taxa-4(20),11-dien-5alpha-ol + acetyl-CoA = taxa-4(20),11-dien-5alpha-yl acetate + CoA. The protein operates within alkaloid biosynthesis; taxol biosynthesis; 10-deacetyl-2-debenzoylbaccatin III from taxa-4(20),11-dien-5alpha-ol: step 1/3. This Taxus chinensis (Chinese yew) protein is Taxadien-5-alpha-ol O-acetyltransferase.